We begin with the raw amino-acid sequence, 361 residues long: Phosphoserine aminotransferase (361 aa).

Position 42 (arginine 42) interacts with L-glutamate. Pyridoxal 5'-phosphate is bound by residues 76-77, tryptophan 102, threonine 152, aspartate 172, and glutamine 195; that span reads AT. Lysine 196 is modified (N6-(pyridoxal phosphate)lysine). 237–238 serves as a coordination point for pyridoxal 5'-phosphate; it reads NT.

The protein belongs to the class-V pyridoxal-phosphate-dependent aminotransferase family. SerC subfamily. Homodimer. The cofactor is pyridoxal 5'-phosphate.

It is found in the cytoplasm. It carries out the reaction O-phospho-L-serine + 2-oxoglutarate = 3-phosphooxypyruvate + L-glutamate. The enzyme catalyses 4-(phosphooxy)-L-threonine + 2-oxoglutarate = (R)-3-hydroxy-2-oxo-4-phosphooxybutanoate + L-glutamate. It functions in the pathway amino-acid biosynthesis; L-serine biosynthesis; L-serine from 3-phospho-D-glycerate: step 2/3. Its pathway is cofactor biosynthesis; pyridoxine 5'-phosphate biosynthesis; pyridoxine 5'-phosphate from D-erythrose 4-phosphate: step 3/5. Functionally, catalyzes the reversible conversion of 3-phosphohydroxypyruvate to phosphoserine and of 3-hydroxy-2-oxo-4-phosphonooxybutanoate to phosphohydroxythreonine. This chain is Phosphoserine aminotransferase, found in Xanthomonas euvesicatoria pv. vesicatoria (strain 85-10) (Xanthomonas campestris pv. vesicatoria).